Consider the following 262-residue polypeptide: Small ribosomal subunit protein eS1 (262 aa).

The protein belongs to the eukaryotic ribosomal protein eS1 family. Component of the small ribosomal subunit. Mature ribosomes consist of a small (40S) and a large (60S) subunit. The 40S subunit contains about 33 different proteins and 1 molecule of RNA (18S). The 60S subunit contains about 49 different proteins and 3 molecules of RNA (25S, 5.8S and 5S).

The protein localises to the cytoplasm. The polypeptide is Small ribosomal subunit protein eS1 (Theileria parva (East coast fever infection agent)).